Reading from the N-terminus, the 659-residue chain is 4-alpha-glucanotransferase (659 aa).

E123 functions as the Nucleophile in the catalytic mechanism. Catalysis depends on D214, which acts as the Proton donor.

It belongs to the glycosyl hydrolase 57 family. In terms of assembly, homodimer.

The catalysed reaction is Transfers a segment of a (1-&gt;4)-alpha-D-glucan to a new position in an acceptor, which may be glucose or a (1-&gt;4)-alpha-D-glucan.. Inhibited by p-chloromercuribenzoic acid, monoiodoacetic acid, mercury and nickel ions. Functionally, catalyzes the transglycosylation of maltooligosaccharides, yielding maltooligosaccharides of various lengths and glucose. Maltose and glucose can be used as acceptors in the transfer reaction. The chain is 4-alpha-glucanotransferase (jgt) from Thermococcus litoralis (strain ATCC 51850 / DSM 5473 / JCM 8560 / NS-C).